The following is a 267-amino-acid chain: Glutamate 5-kinase (267 aa).

Residue K17 participates in ATP binding. S57, D144, and N156 together coordinate substrate. ATP contacts are provided by residues 176-177 (SD) and 218-224 (TGGMATK).

It belongs to the glutamate 5-kinase family.

It is found in the cytoplasm. It carries out the reaction L-glutamate + ATP = L-glutamyl 5-phosphate + ADP. It participates in amino-acid biosynthesis; L-proline biosynthesis; L-glutamate 5-semialdehyde from L-glutamate: step 1/2. In terms of biological role, catalyzes the transfer of a phosphate group to glutamate to form L-glutamate 5-phosphate. The chain is Glutamate 5-kinase from Clostridium acetobutylicum (strain ATCC 824 / DSM 792 / JCM 1419 / IAM 19013 / LMG 5710 / NBRC 13948 / NRRL B-527 / VKM B-1787 / 2291 / W).